Consider the following 423-residue polypeptide: Large ribosomal subunit protein mL37 (423 aa).

The transit peptide at 1–29 (MALASGPARRVLARPWGLGLEGCGVPRRG) directs the protein to the mitochondrion.

Belongs to the mitochondrion-specific ribosomal protein mL37 family. As to quaternary structure, component of the mitochondrial ribosome large subunit (39S) which comprises a 16S rRNA and about 50 distinct proteins.

The protein localises to the mitochondrion. The chain is Large ribosomal subunit protein mL37 (MRPL37) from Bos taurus (Bovine).